The chain runs to 644 residues: Sodium/hydrogen exchanger 9 (644 aa).

The Lumenal portion of the chain corresponds to 1 to 20 (MAGQLRFTSGKDEDHFQHQG). A helical membrane pass occupies residues 21–41 (AVELLAFNFLLILTILTIWLF). Over 42–45 (KNHR) the chain is Cytoplasmic. A helical membrane pass occupies residues 46–66 (FRFLHETGGAMVYGLIMGLIL). Residues 67–126 (RYATAPTDIDSGTVYNCGNLFFSPSTLLVNITDQVYEYKYQREINQHNISPHQGNAILEK) are Lumenal-facing. The chain crosses the membrane as a helical span at residues 127-147 (MTFDPEIFFNVLLPPIIFHAG). Residues 148–164 (YSLKKRHFFQNLGSILT) lie on the Cytoplasmic side of the membrane. A helical membrane pass occupies residues 165-185 (YAFLGTAISCVVIGLIMYGFV). At 186–203 (KAMVHAGQLKSGDFHFTD) the chain is on the lumenal side. A helical membrane pass occupies residues 204–224 (CLFFGSLMSATDPVTVLAIFH). The Cytoplasmic portion of the chain corresponds to 225–235 (ELHVDPDLYTL). Residues 236 to 256 (LFGESVLNDAVAIVLTYSISI) traverse the membrane as a helical segment. Topologically, residues 257–277 (YSPKENPNAFDTAAFFQSVGN) are lumenal. A helical transmembrane segment spans residues 278-298 (FLGIFAGSFAMGSAYAVVTAL). Topologically, residues 299–309 (LTKFTKLREFP) are cytoplasmic. The helical transmembrane segment at 310–327 (MLETGLFFLLSWSAFLSA) threads the bilayer. The Lumenal portion of the chain corresponds to 328-333 (EAAGLT). Residues 334 to 350 (GIVAVLFCGVTQAHYTY) form a helical membrane-spanning segment. Residues 351-364 (NNLSSDSKLRTKQL) lie on the Cytoplasmic side of the membrane. Residues 365–385 (FEFMNFLAENVIFCYMGLALF) form a helical membrane-spanning segment. Thr-386 is a topological domain (lumenal). The chain crosses the membrane as a helical span at residues 387–407 (FQNHIFNALFILGAFLAIFVA). The Cytoplasmic segment spans residues 408–429 (RACNIYPLSFLLNLGRKQKIPW). A helical membrane pass occupies residues 430–450 (NFQHMMMFSGLRGAIAFALAI). Over 451–465 (RNTESQPKQMMFTTT) the chain is Lumenal. The helical transmembrane segment at 466–486 (LLLVFFTVWVFGGGTTPMLTW) threads the bilayer. At 487 to 644 (LQIRVGVDLD…EQTRGQPQMD (158 aa)) the chain is on the cytoplasmic side. Residues 590–644 (YQEQSPSPSSPTTKLALDQKSSGQTPGKENIYEGDLGLGGYDLKLEQTRGQPQMD) are disordered.

Belongs to the monovalent cation:proton antiporter 1 (CPA1) transporter (TC 2.A.36) family. Homodimer; phosphatidylinositol-4,5-bisphosphate (PIP2) and phosphatidylinositol 3,4,5-trisphosphate (PIP3) could be involved in the dimer stabilization. Interacts (via the C-terminus) with RACK1. Interacts with CHP1. As to expression, expressed in the brain. Highly expressed in immune cells, specifically macrophages.

The protein resides in the late endosome membrane. The protein localises to the cell membrane. It localises to the early endosome membrane. Its subcellular location is the recycling endosome membrane. It is found in the cytoplasmic vesicle. The protein resides in the phagosome membrane. It catalyses the reaction Na(+)(in) + H(+)(out) = Na(+)(out) + H(+)(in). The catalysed reaction is K(+)(in) + H(+)(out) = K(+)(out) + H(+)(in). Endosomal Na(+), K(+)/H(+) antiporter. Mediates the electroneutral exchange of endosomal luminal H(+) for a cytosolic Na(+) or K(+). By facilitating proton efflux, SLC9A9 counteracts the acidity generated by vacuolar (V)-ATPase, thereby limiting luminal acidification. Regulates organellar pH and consequently, endosome maturation and endocytic trafficking of plasma membrane receptors and neurotransporters. Promotes the recycling of transferrin receptors back to the cell surface to facilitate additional iron uptake in the brain. Regulates synaptic transmission by regulating the luminal pH of axonal endosomes. Regulates phagosome lumenal pH, thus affecting phagosome maturation, and consequently, microbicidal activity in macrophages. Can also be active at the cell surface of specialized cells, e.g., in the inner ear hair bundles uses the high K(+) of the endolymph to regulate intracelular pH. In Mus musculus (Mouse), this protein is Sodium/hydrogen exchanger 9 (Slc9a9).